Here is a 512-residue protein sequence, read N- to C-terminus: MDKFKRDGEEYISYQRRFLYPLLFQEDLYAIAYDHYFNRSSCFEPMENSSSNDRFSFLTVKRLISRIHQQNDLIISFLNCDQNPFVGHNSSFYSELVLEGPTVVLEVPFLMRSKHSLEKKNEWKSFRSIHSIFSFMEDKFPHPNSISDMRIPHSIHSEIFIRTFRRWVRDAPSLHLSRSVLHEHRNSSENLYKSILIAPEGNTKFFLFLWNYYAYECESLLVPLRKRSSHSRLLSYGAFLEQIHSYRKIEHIVIFSRRNLAKSIWSLKDSSISYVRYGERSIMALKGAHSSVRRWRYYLSIFWRCYFHFWSQPYRIRIDELSNNCSSFLGYFLGVRMNTSVVRIKMLDDLFITDLITNEFDSIAPIIPLIGLLAKERFCDISGRPISKLAWTGLKDDDILDRFDRICRNIIDYYSGSFNKDGSYRMKYILRLPCAKTLACRHKSTIRVVWEEFGSELFTKSFPKEGELISPFFSKTCSQRKRIWHSDILRINLPANFWQNKRNRQIETLFGL.

It belongs to the intron maturase 2 family. MatK subfamily.

It localises to the plastid. The protein resides in the chloroplast. Its function is as follows. Usually encoded in the trnK tRNA gene intron. Probably assists in splicing its own and other chloroplast group II introns. The polypeptide is Maturase K (Ginkgo biloba (Ginkgo)).